An 809-amino-acid polypeptide reads, in one-letter code: Sucrose synthase 4 (809 aa).

A GT-B glycosyltransferase region spans residues 275–753 (MIFNVVVVSP…GLQRIYEKYT (479 aa)).

The protein belongs to the glycosyltransferase 1 family. Plant sucrose synthase subfamily. In terms of tissue distribution, predominantly expressed in the leaf tissues and in caryopses.

The enzyme catalyses an NDP-alpha-D-glucose + D-fructose = a ribonucleoside 5'-diphosphate + sucrose + H(+). Sucrose-cleaving enzyme that provides UDP-glucose and fructose for various metabolic pathways. This is Sucrose synthase 4 (SUS4) from Oryza sativa subsp. japonica (Rice).